The following is a 199-amino-acid chain: Probable chemoreceptor glutamine deamidase CheD (199 aa).

It belongs to the CheD family.

It catalyses the reaction L-glutaminyl-[protein] + H2O = L-glutamyl-[protein] + NH4(+). In terms of biological role, probably deamidates glutamine residues to glutamate on methyl-accepting chemotaxis receptors (MCPs), playing an important role in chemotaxis. The sequence is that of Probable chemoreceptor glutamine deamidase CheD from Cereibacter sphaeroides (strain ATCC 17029 / ATH 2.4.9) (Rhodobacter sphaeroides).